The primary structure comprises 304 residues: Secreted mono- and diacylglycerol lipase MDL3 (304 aa).

Residues 1–19 (MIVGPVISLLLSYFVLVSG) form the signal peptide. The cysteines at positions 55 and 297 are disulfide-linked. The N-linked (GlcNAc...) asparagine glycan is linked to N161. The active-site Nucleophile is S171. Catalysis depends on residues D228 and H281.

It belongs to the AB hydrolase superfamily. Lipase family. Class 3 subfamily.

It localises to the secreted. The protein localises to the cell wall. The catalysed reaction is a monoacylglycerol + H2O = glycerol + a fatty acid + H(+). The enzyme catalyses a diacylglycerol + H2O = a monoacylglycerol + a fatty acid + H(+). Secreted lipase involved in Dandruff and seborrheic dermatitis (D/SD) probably via lipase-mediated breakdown of sebaceous lipids and release of irritating free fatty acids. Shows activity against monoglyceride and diglyceride substrates, but not triglyceride substrates and does not exhibit regio-selective production of diacylglycerols. Hydrolyzes distearin, dilinolein, dipalmitoylglycerol and dipalmitolein. Cleaves oleic acid from 1,2 isomers of diolein on both the 1 and the 2 position of the glycerol backbone, resulting mainly in free fatty acids but no monoolein is detected. Shows activity on monoolein and liberates mostly free fatty acids, but can also perform the reverse reaction and produce diolein. This is Secreted mono- and diacylglycerol lipase MDL3 from Malassezia globosa (strain ATCC MYA-4612 / CBS 7966) (Dandruff-associated fungus).